We begin with the raw amino-acid sequence, 263 residues long: Indole-3-glycerol phosphate synthase (263 aa).

This sequence belongs to the TrpC family.

The catalysed reaction is 1-(2-carboxyphenylamino)-1-deoxy-D-ribulose 5-phosphate + H(+) = (1S,2R)-1-C-(indol-3-yl)glycerol 3-phosphate + CO2 + H2O. Its pathway is amino-acid biosynthesis; L-tryptophan biosynthesis; L-tryptophan from chorismate: step 4/5. This Polaromonas naphthalenivorans (strain CJ2) protein is Indole-3-glycerol phosphate synthase.